The sequence spans 75 residues: Protein Tlp homolog (75 aa).

The tract at residues 52–75 (RREALDGMREEIKDEARDKKNGYM) is disordered.

The protein belongs to the Tlp family.

This is Protein Tlp homolog from Clostridium botulinum (strain Okra / Type B1).